The primary structure comprises 395 residues: Phosphopentomutase (395 aa).

Mn(2+)-binding residues include Asp-10, Asp-294, His-299, Asp-335, His-336, and His-347.

The protein belongs to the phosphopentomutase family. Mn(2+) serves as cofactor.

The protein localises to the cytoplasm. It carries out the reaction 2-deoxy-alpha-D-ribose 1-phosphate = 2-deoxy-D-ribose 5-phosphate. The enzyme catalyses alpha-D-ribose 1-phosphate = D-ribose 5-phosphate. It participates in carbohydrate degradation; 2-deoxy-D-ribose 1-phosphate degradation; D-glyceraldehyde 3-phosphate and acetaldehyde from 2-deoxy-alpha-D-ribose 1-phosphate: step 1/2. Isomerase that catalyzes the conversion of deoxy-ribose 1-phosphate (dRib-1-P) and ribose 1-phosphate (Rib-1-P) to deoxy-ribose 5-phosphate (dRib-5-P) and ribose 5-phosphate (Rib-5-P), respectively. This Actinobacillus succinogenes (strain ATCC 55618 / DSM 22257 / CCUG 43843 / 130Z) protein is Phosphopentomutase.